A 466-amino-acid chain; its full sequence is Methylenetetrahydrofolate--tRNA-(uracil-5-)-methyltransferase TrmFO (466 aa).

Residue 14 to 19 coordinates FAD; the sequence is GGGLAG.

It belongs to the MnmG family. TrmFO subfamily. FAD is required as a cofactor.

The protein localises to the cytoplasm. It catalyses the reaction uridine(54) in tRNA + (6R)-5,10-methylene-5,6,7,8-tetrahydrofolate + NADH + H(+) = 5-methyluridine(54) in tRNA + (6S)-5,6,7,8-tetrahydrofolate + NAD(+). The catalysed reaction is uridine(54) in tRNA + (6R)-5,10-methylene-5,6,7,8-tetrahydrofolate + NADPH + H(+) = 5-methyluridine(54) in tRNA + (6S)-5,6,7,8-tetrahydrofolate + NADP(+). In terms of biological role, catalyzes the folate-dependent formation of 5-methyl-uridine at position 54 (M-5-U54) in all tRNAs. The protein is Methylenetetrahydrofolate--tRNA-(uracil-5-)-methyltransferase TrmFO of Brucella abortus (strain 2308).